Here is a 79-residue protein sequence, read N- to C-terminus: U-actitoxin-Avd8a (79 aa).

Positions 1 to 19 (MKSLVIVFVVLLGVAMISA) are cleaved as a signal peptide. Residues 20–36 (NEEELLAILQDQRNDAR) constitute a propeptide that is removed on maturation.

The protein belongs to the sea anemone 8 toxin family.

It localises to the secreted. The protein localises to the nematocyst. The sequence is that of U-actitoxin-Avd8a from Anemonia viridis (Snakelocks anemone).